The following is an 891-amino-acid chain: DNA mismatch repair protein MutS (891 aa).

646–653 (GPNMAGKS) lines the ATP pocket.

The protein belongs to the DNA mismatch repair MutS family.

This protein is involved in the repair of mismatches in DNA. It is possible that it carries out the mismatch recognition step. This protein has a weak ATPase activity. This chain is DNA mismatch repair protein MutS, found in Rickettsia typhi (strain ATCC VR-144 / Wilmington).